The following is a 206-amino-acid chain: MARYIGPKCKLARREGTDLFLKSGVRAIESKCNIEAAPGIHGQRRGRQSDYGTQLREKQKVRRIYGVLERQFSGYYKAAASKKGATGENLLQLLECRLDNVVYRMGFGSTRAESRQLVSHKSISVNGQTVNVPSYQVRAGDVVAVREKAKNQLRIVQALELCAQRGRVEWVEVDAEKKSGVFKNVPARSDLSADINESLIVELYSK.

An S4 RNA-binding domain is found at 96-156 (CRLDNVVYRM…EKAKNQLRIV (61 aa)).

This sequence belongs to the universal ribosomal protein uS4 family. Part of the 30S ribosomal subunit. Contacts protein S5. The interaction surface between S4 and S5 is involved in control of translational fidelity.

Functionally, one of the primary rRNA binding proteins, it binds directly to 16S rRNA where it nucleates assembly of the body of the 30S subunit. Its function is as follows. With S5 and S12 plays an important role in translational accuracy. The protein is Small ribosomal subunit protein uS4 of Pseudomonas fluorescens (strain Pf0-1).